The chain runs to 66 residues: UPF0337 protein RPA4217 (66 aa).

Belongs to the UPF0337 (CsbD) family.

The polypeptide is UPF0337 protein RPA4217 (Rhodopseudomonas palustris (strain ATCC BAA-98 / CGA009)).